The following is a 311-amino-acid chain: Cell division protein ZipA (311 aa).

Residues 1 to 5 (MQELR) are Periplasmic-facing. A helical membrane pass occupies residues 6 to 26 (FVLIVVGALAIMALLFHGLWT). The Cytoplasmic segment spans residues 27-311 (SKKEGKAKFG…QIVEFKAANA (285 aa)). Positions 32–54 (KAKFGDKPLSKLDLGESEPKESE) are enriched in basic and acidic residues. Positions 32 to 60 (KAKFGDKPLSKLDLGESEPKESEMYVAPE) are disordered.

The protein belongs to the ZipA family. As to quaternary structure, interacts with FtsZ via their C-terminal domains.

It localises to the cell inner membrane. In terms of biological role, essential cell division protein that stabilizes the FtsZ protofilaments by cross-linking them and that serves as a cytoplasmic membrane anchor for the Z ring. Also required for the recruitment to the septal ring of downstream cell division proteins. The sequence is that of Cell division protein ZipA from Vibrio vulnificus (strain CMCP6).